The chain runs to 301 residues: Phosphatidylserine decarboxylase proenzyme (301 aa).

Residues aspartate 117, histidine 173, and serine 260 each act as charge relay system; for autoendoproteolytic cleavage activity in the active site. Serine 260 serves as the catalytic Schiff-base intermediate with substrate; via pyruvic acid; for decarboxylase activity. Position 260 is a pyruvic acid (Ser); by autocatalysis (serine 260).

Belongs to the phosphatidylserine decarboxylase family. PSD-B subfamily. Prokaryotic type II sub-subfamily. In terms of assembly, heterodimer of a large membrane-associated beta subunit and a small pyruvoyl-containing alpha subunit. Pyruvate is required as a cofactor. Is synthesized initially as an inactive proenzyme. Formation of the active enzyme involves a self-maturation process in which the active site pyruvoyl group is generated from an internal serine residue via an autocatalytic post-translational modification. Two non-identical subunits are generated from the proenzyme in this reaction, and the pyruvate is formed at the N-terminus of the alpha chain, which is derived from the carboxyl end of the proenzyme. The autoendoproteolytic cleavage occurs by a canonical serine protease mechanism, in which the side chain hydroxyl group of the serine supplies its oxygen atom to form the C-terminus of the beta chain, while the remainder of the serine residue undergoes an oxidative deamination to produce ammonia and the pyruvoyl prosthetic group on the alpha chain. During this reaction, the Ser that is part of the protease active site of the proenzyme becomes the pyruvoyl prosthetic group, which constitutes an essential element of the active site of the mature decarboxylase.

Its subcellular location is the cell membrane. The enzyme catalyses a 1,2-diacyl-sn-glycero-3-phospho-L-serine + H(+) = a 1,2-diacyl-sn-glycero-3-phosphoethanolamine + CO2. Its pathway is phospholipid metabolism; phosphatidylethanolamine biosynthesis; phosphatidylethanolamine from CDP-diacylglycerol: step 2/2. Its function is as follows. Catalyzes the formation of phosphatidylethanolamine (PtdEtn) from phosphatidylserine (PtdSer). The chain is Phosphatidylserine decarboxylase proenzyme from Chlamydia muridarum (strain MoPn / Nigg).